The chain runs to 383 residues: Dual-specificity RNA methyltransferase RlmN (383 aa).

The active-site Proton acceptor is the Glu95. The 249-residue stretch at 101 to 349 (EETRGTLCVS…TTVRKTRGDD (249 aa)) folds into the Radical SAM core domain. Residues Cys108 and Cys354 are joined by a disulfide bond. 3 residues coordinate [4Fe-4S] cluster: Cys115, Cys119, and Cys122. Residues 180–181 (GE), Ser212, 234–236 (SLH), and Asn311 contribute to the S-adenosyl-L-methionine site. Cys354 acts as the S-methylcysteine intermediate in catalysis.

It belongs to the radical SAM superfamily. RlmN family. [4Fe-4S] cluster is required as a cofactor.

The protein localises to the cytoplasm. The enzyme catalyses adenosine(2503) in 23S rRNA + 2 reduced [2Fe-2S]-[ferredoxin] + 2 S-adenosyl-L-methionine = 2-methyladenosine(2503) in 23S rRNA + 5'-deoxyadenosine + L-methionine + 2 oxidized [2Fe-2S]-[ferredoxin] + S-adenosyl-L-homocysteine. It carries out the reaction adenosine(37) in tRNA + 2 reduced [2Fe-2S]-[ferredoxin] + 2 S-adenosyl-L-methionine = 2-methyladenosine(37) in tRNA + 5'-deoxyadenosine + L-methionine + 2 oxidized [2Fe-2S]-[ferredoxin] + S-adenosyl-L-homocysteine. Functionally, specifically methylates position 2 of adenine 2503 in 23S rRNA and position 2 of adenine 37 in tRNAs. m2A2503 modification seems to play a crucial role in the proofreading step occurring at the peptidyl transferase center and thus would serve to optimize ribosomal fidelity. In Paraburkholderia xenovorans (strain LB400), this protein is Dual-specificity RNA methyltransferase RlmN.